The following is a 388-amino-acid chain: MSAAAPKPRPAHRFHIDQTLLSVCLCLLGIGFVMVASSSMHLGVKMADDVSYYPFKQLVHIILGLMFAAAILAIPMKYWQKIGQPLFIVGLVLLLVVLIPGVGVKVNGSTRWLSLLGLRIQVSEVMKFISVVYMAGYITRHSDHVRHSIFGLLRPLMLLSVASILLLLEPDFGSAVVILIIAMGMMFLGGARLSPFVALVALISSAGAILASSADYRVKRMTSFLNPWEHARDSGYQLTQALISFGRGEVSGVGLGNGLQKLFYLPEAHTDFLFSVLGEELGLVGVTLVIALFTTLVVRGFSIGEQAEAAGERFSALVAYGLVIWFGFQAFVNMGVNMGILPTKGLTLPLMSYGGGSMIVMCGAMAVLFRIHYEVTELHKSNIKGKSR.

Topologically, residues 1–19 are cytoplasmic; sequence MSAAAPKPRPAHRFHIDQT. The helical transmembrane segment at 20 to 40 threads the bilayer; sequence LLSVCLCLLGIGFVMVASSSM. Residues 41-57 are Periplasmic-facing; the sequence is HLGVKMADDVSYYPFKQ. Residues 58–78 form a helical membrane-spanning segment; it reads LVHIILGLMFAAAILAIPMKY. At 79–85 the chain is on the cytoplasmic side; sequence WQKIGQP. The chain crosses the membrane as a helical span at residues 86–106; it reads LFIVGLVLLLVVLIPGVGVKV. The Periplasmic segment spans residues 107 to 117; that stretch reads NGSTRWLSLLG. The chain crosses the membrane as a helical span at residues 118 to 137; the sequence is LRIQVSEVMKFISVVYMAGY. At 138–147 the chain is on the cytoplasmic side; sequence ITRHSDHVRH. The helical transmembrane segment at 148–168 threads the bilayer; that stretch reads SIFGLLRPLMLLSVASILLLL. The Periplasmic portion of the chain corresponds to 169–170; it reads EP. A helical membrane pass occupies residues 171 to 191; sequence DFGSAVVILIIAMGMMFLGGA. Position 192 (Arg192) is a topological domain, cytoplasmic. The chain crosses the membrane as a helical span at residues 193–213; that stretch reads LSPFVALVALISSAGAILASS. Topologically, residues 214–271 are periplasmic; it reads ADYRVKRMTSFLNPWEHARDSGYQLTQALISFGRGEVSGVGLGNGLQKLFYLPEAHTD. A helical transmembrane segment spans residues 272–292; sequence FLFSVLGEELGLVGVTLVIAL. The Cytoplasmic segment spans residues 293-315; that stretch reads FTTLVVRGFSIGEQAEAAGERFS. A helical transmembrane segment spans residues 316 to 336; sequence ALVAYGLVIWFGFQAFVNMGV. Over 337-348 the chain is Periplasmic; that stretch reads NMGILPTKGLTL. Residues 349–369 traverse the membrane as a helical segment; the sequence is PLMSYGGGSMIVMCGAMAVLF. The Cytoplasmic portion of the chain corresponds to 370–388; that stretch reads RIHYEVTELHKSNIKGKSR.

This sequence belongs to the SEDS family. FtsW subfamily.

The protein resides in the cell inner membrane. It catalyses the reaction [GlcNAc-(1-&gt;4)-Mur2Ac(oyl-L-Ala-gamma-D-Glu-L-Lys-D-Ala-D-Ala)](n)-di-trans,octa-cis-undecaprenyl diphosphate + beta-D-GlcNAc-(1-&gt;4)-Mur2Ac(oyl-L-Ala-gamma-D-Glu-L-Lys-D-Ala-D-Ala)-di-trans,octa-cis-undecaprenyl diphosphate = [GlcNAc-(1-&gt;4)-Mur2Ac(oyl-L-Ala-gamma-D-Glu-L-Lys-D-Ala-D-Ala)](n+1)-di-trans,octa-cis-undecaprenyl diphosphate + di-trans,octa-cis-undecaprenyl diphosphate + H(+). The protein operates within cell wall biogenesis; peptidoglycan biosynthesis. Functionally, peptidoglycan polymerase that is essential for cell division. The protein is Probable peptidoglycan glycosyltransferase FtsW of Methylomonas methanica (strain DSM 25384 / MC09).